The chain runs to 244 residues: CTD nuclear envelope phosphatase 1 (244 aa).

A helical membrane pass occupies residues 7 to 29 (LLGLRTFVAFAAKLWSFFIYLLR). In terms of domain architecture, FCP1 homology spans 57–224 (AQVKRKILVL…LNLLPMLDAL (168 aa)).

Belongs to the dullard family. Interacts with CNEP1R1; the complex dephosphorylates LPIN1 and LPIN2. As to expression, muscle specific with lower expression in other metabolic tissues.

The protein localises to the endoplasmic reticulum membrane. It is found in the nucleus membrane. It carries out the reaction O-phospho-L-seryl-[protein] + H2O = L-seryl-[protein] + phosphate. It catalyses the reaction O-phospho-L-threonyl-[protein] + H2O = L-threonyl-[protein] + phosphate. Functionally, serine/threonine protein phosphatase forming with CNEP1R1 an active phosphatase complex that dephosphorylates and may activate LPIN1 and LPIN2. LPIN1 and LPIN2 are phosphatidate phosphatases that catalyze the conversion of phosphatidic acid to diacylglycerol and control the metabolism of fatty acids at different levels. May indirectly modulate the lipid composition of nuclear and/or endoplasmic reticulum membranes and be required for proper nuclear membrane morphology and/or dynamics. May also indirectly regulate the production of lipid droplets and triacylglycerol. May antagonize BMP signaling. This chain is CTD nuclear envelope phosphatase 1 (Ctdnep1), found in Mus musculus (Mouse).